The following is a 224-amino-acid chain: BOS complex subunit TMEM147 (224 aa).

The helical transmembrane segment at 1-21 threads the bilayer; sequence MTLFHFGNCFALAYFPYFITY. Residues 22-34 are Cytoplasmic-facing; the sequence is KCSGLSEYNAFWK. The chain crosses the membrane as a helical span at residues 35–58; sequence CVQAGVTYLFVQLCKMLFLATFFP. The Lumenal segment spans residues 59–66; the sequence is TWEGGIYD. A helical membrane pass occupies residues 67–88; it reads FIGEFMKASVDVADLIGLNLVM. Residues 89–98 lie on the Cytoplasmic side of the membrane; that stretch reads SRNAGKGEYK. Residues 99–124 form a helical membrane-spanning segment; the sequence is IMVAALGWATAELIMSRCIPLWVGAR. At 125 to 129 the chain is on the lumenal side; it reads GIEFD. Residues 130–155 form a helical membrane-spanning segment; the sequence is WKYIQMSIDSNISLVHYIVASAQVWM. Over 156-164 the chain is Cytoplasmic; that stretch reads ITRYDLYHT. Residues 165–187 traverse the membrane as a helical segment; the sequence is FRPAVLLLMFLSVYKAFVMETFV. Residues 188-194 are Lumenal-facing; sequence HLCSLGS. The chain crosses the membrane as a helical span at residues 195–216; sequence WAALLARAVVTGLLALSTLALY. Residues 217–224 lie on the Cytoplasmic side of the membrane; the sequence is VAVVNVHS.

It belongs to the TMEM147 family. Component of the back of Sec61 (BOS) complex, composed of NCLN/Nicalin, NOMO (NOMO1, NOMO2 or NOMO3) and TMEM147. The BOS complex is part of the multi-pass translocon (MPT) complex, composed of three subcomplexes, the GEL complex (composed of RAB5IF/OPTI and TMCO1), the BOS complex (composed of NCLN/Nicalin, NOMO and TMEM147) and the PAT complex (composed of WDR83OS/Asterix and CCDC47). The MPT complex associates with the SEC61 complex. Interacts with CHRM3, CHRM1 and AVPR2. Interacts with LBR; promoting LBR localization to the nucleus inner membrane. Interacts with DHCR7.

Its subcellular location is the endoplasmic reticulum membrane. The protein localises to the nucleus membrane. The protein resides in the cell membrane. Its function is as follows. Component of the multi-pass translocon (MPT) complex that mediates insertion of multi-pass membrane proteins into the lipid bilayer of membranes. The MPT complex takes over after the SEC61 complex: following membrane insertion of the first few transmembrane segments of proteins by the SEC61 complex, the MPT complex occludes the lateral gate of the SEC61 complex to promote insertion of subsequent transmembrane regions. Also acts as a negative regulator of CHRM3 function, most likely by interfering with its trafficking to the cell membrane. Negatively regulates CHRM3-mediated calcium mobilization and activation of RPS6KA1/p90RSK activity. Regulates LBR localization to the nucleus inner membrane. The protein is BOS complex subunit TMEM147 of Homo sapiens (Human).